The primary structure comprises 53 residues: Large ribosomal subunit protein eL24 (53 aa).

Zn(2+) contacts are provided by Cys-4, Cys-7, Cys-30, and Cys-34. The C4-type zinc finger occupies 4–34; that stretch reads CSFCHEEIEPGTGKMYVKRDGTIYFFCSSKC.

The protein belongs to the eukaryotic ribosomal protein eL24 family. As to quaternary structure, part of the 50S ribosomal subunit. Forms a cluster with proteins L3 and L14. It depends on Zn(2+) as a cofactor.

In terms of biological role, binds to the 23S rRNA. This Methanothermobacter thermautotrophicus (strain ATCC 29096 / DSM 1053 / JCM 10044 / NBRC 100330 / Delta H) (Methanobacterium thermoautotrophicum) protein is Large ribosomal subunit protein eL24.